The following is a 211-amino-acid chain: Redox-sensing transcriptional repressor Rex (211 aa).

The H-T-H motif DNA-binding region spans 18–57 (LYYRFIESLHAAGKQRVSSTELSQAVKVDSATIRRDFSYF). 92-97 (GVGNLG) contributes to the NAD(+) binding site.

The protein belongs to the transcriptional regulatory Rex family. In terms of assembly, homodimer.

It localises to the cytoplasm. In terms of biological role, modulates transcription in response to changes in cellular NADH/NAD(+) redox state. This Shouchella clausii (strain KSM-K16) (Alkalihalobacillus clausii) protein is Redox-sensing transcriptional repressor Rex.